The primary structure comprises 360 residues: MINLFLFCRAGYEKDCAAEIQVRAAELDIGGFVKTNTNDAYVIFQCFQAGDAEVLAKNISLDSLIFARQMFAAKELLKGLPEQDRISPIVEALAQVHKAGELRVETPDTNEAKELSNFCRKFTVPLRQALKKSGALLEKENPKRPIIHVCFVASGQAYVGFSLSNNSSPYFMGIPRLKIAADAPSRSTLKLDEAFIHFIPKEEQETRLSSGMKAVDLGACPGGWTYQLVRRGMFVAAVDNGPMDQGLMDTGQVKHYQADGFRFEPPRKNITWLVCDMIEKPSRVAELIEAWAINGWFKESIFNLKLPMKARYKEVSTILATMEEILKENGVDDFSIAAKHLYHDRDEVTVHLCLRPSQPW.

Residues Ser187, 220–223, Asp239, Asp259, and Asp276 each bind S-adenosyl-L-methionine; that span reads CPGG. The active-site Proton acceptor is the Lys305.

Belongs to the class I-like SAM-binding methyltransferase superfamily. RNA methyltransferase RlmE family. RlmM subfamily. Monomer.

Its subcellular location is the cytoplasm. It catalyses the reaction cytidine(2498) in 23S rRNA + S-adenosyl-L-methionine = 2'-O-methylcytidine(2498) in 23S rRNA + S-adenosyl-L-homocysteine + H(+). Its function is as follows. Catalyzes the 2'-O-methylation at nucleotide C2498 in 23S rRNA. This Shewanella halifaxensis (strain HAW-EB4) protein is Ribosomal RNA large subunit methyltransferase M.